A 486-amino-acid polypeptide reads, in one-letter code: ATP-dependent rRNA helicase RRP3 (486 aa).

Residues 1–11 are compositionally biased toward basic residues; that stretch reads MSKVTKQSKSH. Positions 1-52 are disordered; the sequence is MSKVTKQSKSHKSSELVSLAEKIKQKALENRKQSREESQATEEANTASETEA. Positions 17-49 form a coiled coil; sequence VSLAEKIKQKALENRKQSREESQATEEANTASE. The segment covering 21 to 38 has biased composition (basic and acidic residues); sequence EKIKQKALENRKQSREES. Residues 41–52 show a composition bias toward low complexity; that stretch reads TEEANTASETEA. A Q motif motif is present at residues 66 to 94; it reads SSFRELDLVPELIEACDNLNFTKPTPIQS. The Helicase ATP-binding domain occupies 97 to 269; it reads IPPALQGKDI…RASLTNPVKC (173 aa). Position 110-117 (110-117) interacts with ATP; it reads AQTGSGKT. Positions 216–219 match the DEAD box motif; that stretch reads DEAD. The Helicase C-terminal domain occupies 300-446; the sequence is LLNEFIGKTT…SIVLSLRDSV (147 aa). The segment at 459–486 is disordered; that stretch reads RRNKEKQTRGKGRRSRTATRENMDKEEE. Basic and acidic residues predominate over residues 476-486; that stretch reads ATRENMDKEEE.

Belongs to the DEAD box helicase family. DDX47/RRP3 subfamily. In terms of assembly, interacts with the SSU processome.

It localises to the nucleus. The enzyme catalyses ATP + H2O = ADP + phosphate + H(+). In terms of biological role, ATP-dependent rRNA helicase required for pre-ribosomal RNA processing. Involved in the maturation of the 35S-pre-rRNA and to its cleavage to mature 18S rRNA. This chain is ATP-dependent rRNA helicase RRP3, found in Eremothecium gossypii (strain ATCC 10895 / CBS 109.51 / FGSC 9923 / NRRL Y-1056) (Yeast).